A 374-amino-acid polypeptide reads, in one-letter code: NADH-quinone oxidoreductase subunit D 1 (374 aa).

The protein belongs to the complex I 49 kDa subunit family. NDH-1 is composed of 14 different subunits. Subunits NuoB, C, D, E, F, and G constitute the peripheral sector of the complex.

The protein localises to the cell membrane. The enzyme catalyses a quinone + NADH + 5 H(+)(in) = a quinol + NAD(+) + 4 H(+)(out). Functionally, NDH-1 shuttles electrons from NADH, via FMN and iron-sulfur (Fe-S) centers, to quinones in the respiratory chain. The immediate electron acceptor for the enzyme in this species is believed to be ubiquinone. Couples the redox reaction to proton translocation (for every two electrons transferred, four hydrogen ions are translocated across the cytoplasmic membrane), and thus conserves the redox energy in a proton gradient. This Roseiflexus sp. (strain RS-1) protein is NADH-quinone oxidoreductase subunit D 1.